A 385-amino-acid polypeptide reads, in one-letter code: MAPSISPVTQPLVSMAIAPTVVIRSALAKAGEHLQKLGSKGLVVTGSHSAELGEKSLQTLQKNYGLTLPLASYLPDCAESSLEQLRRRVHQEQPDFILGIGGGKALDTAKLLAHQTQLAIATVPTSAATCAGWTALANVYSETGAFRYDVALDRCPDLLIVDYELIQRAEPRLLVAGIGDAIAKWYEASVSSGQSSDTFTVAAVQQARILRDILFQKSAEALAQPGSETWREVVDASLLMAGVIGGLGGANCRTVAAHAVHNGLTQLPQAHHALHGEKVAYGILVQLRLEELVSGNQLAATARRQLLSFYDEIGLPKTLQDLGLGRISLEELRQTAEFTCLPNSDIHRLPFTVTPETLMAAMVSTLVEEQGTRQLFAQIQDNSGL.

Asp-180, His-258, and His-275 together coordinate Zn(2+).

This sequence belongs to the iron-containing alcohol dehydrogenase family. Zn(2+) serves as cofactor.

This is an uncharacterized protein from Synechocystis sp. (strain ATCC 27184 / PCC 6803 / Kazusa).